Consider the following 375-residue polypeptide: Methylthioribose-1-phosphate isomerase (375 aa).

D259 (proton donor) is an active-site residue.

Belongs to the eIF-2B alpha/beta/delta subunits family. MtnA subfamily.

The protein resides in the cytoplasm. The protein localises to the nucleus. The enzyme catalyses 5-(methylsulfanyl)-alpha-D-ribose 1-phosphate = 5-(methylsulfanyl)-D-ribulose 1-phosphate. It participates in amino-acid biosynthesis; L-methionine biosynthesis via salvage pathway; L-methionine from S-methyl-5-thio-alpha-D-ribose 1-phosphate: step 1/6. In terms of biological role, catalyzes the interconversion of methylthioribose-1-phosphate (MTR-1-P) into methylthioribulose-1-phosphate (MTRu-1-P). The sequence is that of Methylthioribose-1-phosphate isomerase from Populus trichocarpa (Western balsam poplar).